The following is a 552-amino-acid chain: CCR4-NOT transcription complex subunit 6 (552 aa).

4 LRR repeats span residues 52-73 (HLTA…IAKL), 75-96 (NLVY…LGNM), 98-120 (SLRE…GKLF), and 121-143 (QLQT…CLEP). The tract at residues 153–552 (LLDNLSVSTE…VNGIHLPGRR (400 aa)) is nuclease domain. Glu235 provides a ligand contact to Mg(2+). 4 residues coordinate substrate: Glu235, Glu271, His356, and Pro361. Asp407 serves as a coordination point for Mg(2+). The Proton donor/acceptor role is filled by Asp407. Asn409, Asn476, and Phe481 together coordinate substrate.

The protein belongs to the CCR4/nocturin family. In terms of assembly, subunit of the CCR4-NOT core complex. It depends on Mg(2+) as a cofactor.

It localises to the cytoplasm. The protein resides in the nucleus. The catalysed reaction is Exonucleolytic cleavage of poly(A) to 5'-AMP.. In terms of biological role, poly(A) nuclease involved in mRNA decay. Has 3'-5' RNase activity. The CCR4-NOT complex functions as a general transcription regulation complex. Enhances ligand-dependent transcriptional activity of nuclear hormone receptors. This chain is CCR4-NOT transcription complex subunit 6 (cnot6), found in Xenopus laevis (African clawed frog).